A 103-amino-acid chain; its full sequence is Large ribosomal subunit protein bL21 (103 aa).

The protein belongs to the bacterial ribosomal protein bL21 family. Part of the 50S ribosomal subunit. Contacts protein L20.

This protein binds to 23S rRNA in the presence of protein L20. The polypeptide is Large ribosomal subunit protein bL21 (Shewanella piezotolerans (strain WP3 / JCM 13877)).